The following is a 441-amino-acid chain: Ribosomal protein uS12 methylthiotransferase RimO (441 aa).

Residues 8-118 enclose the MTTase N-terminal domain; the sequence is PKIGFVSLGC…VLQHVHHYVP (111 aa). Cys17, Cys53, Cys82, Cys150, Cys154, and Cys157 together coordinate [4Fe-4S] cluster. The Radical SAM core domain occupies 136–373; the sequence is LTPRHYAYLK…MQLQQQISAE (238 aa). The 66-residue stretch at 376–441 folds into the TRAM domain; that stretch reads QEKVGREILV…DEYDLWGSRV (66 aa).

It belongs to the methylthiotransferase family. RimO subfamily. The cofactor is [4Fe-4S] cluster.

The protein localises to the cytoplasm. The catalysed reaction is L-aspartate(89)-[ribosomal protein uS12]-hydrogen + (sulfur carrier)-SH + AH2 + 2 S-adenosyl-L-methionine = 3-methylsulfanyl-L-aspartate(89)-[ribosomal protein uS12]-hydrogen + (sulfur carrier)-H + 5'-deoxyadenosine + L-methionine + A + S-adenosyl-L-homocysteine + 2 H(+). Catalyzes the methylthiolation of an aspartic acid residue of ribosomal protein uS12. The protein is Ribosomal protein uS12 methylthiotransferase RimO of Salmonella paratyphi A (strain ATCC 9150 / SARB42).